The sequence spans 98 residues: Peptide YY (98 aa).

Positions 1-28 (MVAVRRPWPVMVAMLLVLLACLGALVDA) are cleaved as a signal peptide. Ser41 is subject to Phosphoserine. Position 64 is a tyrosine amide (Tyr64). Residues 68–98 (EVPAALFSKLLFTDDSENLPFRSRPEGVDQW) constitute a propeptide that is removed on maturation.

This sequence belongs to the NPY family. The peptide YY form is cleaved at Pro-30 by the prolyl endopeptidase FAP (seprase) activity (in vitro) to generate peptide YY(3-36).

The protein resides in the secreted. Its function is as follows. This gut peptide inhibits exocrine pancreatic secretion, has a vasoconstrictory action and inhibitis jejunal and colonic mobility. The sequence is that of Peptide YY (Pyy) from Rattus norvegicus (Rat).